The sequence spans 502 residues: Alpha-globin transcription factor CP2 (502 aa).

The Grh/CP2 DB domain occupies 61-300 (ENKILPFQYV…SPGFNSSHSS (240 aa)). The interval 133–395 (EHQQLEGWRW…VRPRLTIYVC (263 aa)) is DNA-binding. Disordered stretches follow at residues 238–268 (FKPKGADRKQKTDREKMEKRTPHEKEKYQPS) and 294–325 (FNSSHSSFSLGEGNGSPNHQPEPPPPVTDNLL). Residues 241-265 (KGADRKQKTDREKMEKRTPHEKEKY) are compositionally biased toward basic and acidic residues. At serine 353 the chain carries Phosphoserine.

It belongs to the grh/CP2 family. CP2 subfamily. Binds to DNA as a dimer, isoform 3 does not bind to DNA or affect the binding of isoform 1 to DNA. Interacts with UBP1 and PIAS1, and is probably part of a complex containing TFCP2, UBP1 and PIAS1. Component of the SSP (stage selector protein) complex, which appears to be a heteromer of TFCP2 and 2 copies of NFE4. Ubiquitous. Expressed in brain, ovary, kidney, thymus, spleen, liver, adrenal, heart and lung (at protein level).

Its subcellular location is the nucleus. Functionally, binds a variety of cellular and viral promoters including fibrinogen, alpha-globin, SV40 and HIV-1 promoters. Activation of the alpha-globin promoter in erythroid cells is via synergistic interaction with UBP1. Functions as part of the SSP (stage selector protein) complex. Facilitates the interaction of the gamma-globin genes with enhancer elements contained in the locus control region in fetal erythroid cells. Interacts by binding to the stage selector element (SSE) in the proximal gamma-globin promoter. The sequence is that of Alpha-globin transcription factor CP2 (TFCP2) from Homo sapiens (Human).